Reading from the N-terminus, the 350-residue chain is Ornithine cyclodeaminase (350 aa).

R45 and K69 together coordinate L-ornithine. NAD(+)-binding positions include T84, R112, 139–140 (AQ), D161, T202, 225–228 (VGGD), K232, and S293. L-ornithine is bound at residue R112. D228 contacts L-ornithine. D228 serves as the catalytic Proton donor/acceptor. Residue V294 participates in L-ornithine binding. K331 is a binding site for NAD(+).

It belongs to the ornithine cyclodeaminase/mu-crystallin family. Homodimer. NAD(+) is required as a cofactor.

It carries out the reaction L-ornithine = L-proline + NH4(+). It participates in amino-acid biosynthesis; L-proline biosynthesis; L-proline from L-ornithine: step 1/1. Functionally, catalyzes the conversion of L-ornithine into L-proline with release of ammonia. Is likely involved in the L-ornithine degradation pathway that allows P.putida to utilize this compound as sole carbon and nitrogen source. The polypeptide is Ornithine cyclodeaminase (Pseudomonas putida (strain ATCC 47054 / DSM 6125 / CFBP 8728 / NCIMB 11950 / KT2440)).